The chain runs to 337 residues: Protein BIG GRAIN 1-like (337 aa).

Disordered regions lie at residues Met1–Ser32, Ser120–Ser163, and Lys179–Ser235. Positions His137–Ala146 are enriched in basic and acidic residues. Low complexity-rich tracts occupy residues Pro150–Ser163 and Pro195–Ala209.

This sequence belongs to the BIG GRAIN 1 (BG1) plant protein family.

Its subcellular location is the cell membrane. Functionally, involved in auxin transport. Regulator of the auxin signaling pathway. This chain is Protein BIG GRAIN 1-like, found in Oryza sativa subsp. japonica (Rice).